The primary structure comprises 181 residues: Acetolactate synthase small subunit (181 aa).

Residues 4–78 (TLSVLVEDES…NVLKIQDITN (75 aa)) form the ACT domain.

The protein belongs to the acetolactate synthase small subunit family. In terms of assembly, dimer of large and small chains.

It is found in the plastid. Its subcellular location is the chloroplast. It carries out the reaction 2 pyruvate + H(+) = (2S)-2-acetolactate + CO2. It participates in amino-acid biosynthesis; L-isoleucine biosynthesis; L-isoleucine from 2-oxobutanoate: step 1/4. The protein operates within amino-acid biosynthesis; L-valine biosynthesis; L-valine from pyruvate: step 1/4. This is Acetolactate synthase small subunit (ilvH) from Galdieria sulphuraria (Red alga).